We begin with the raw amino-acid sequence, 345 residues long: Anthranilate phosphoribosyltransferase (345 aa).

5-phospho-alpha-D-ribose 1-diphosphate contacts are provided by residues Gly79, Gly82–Asp83, Thr87, Asn89–Thr92, Lys106–Gly114, and Ser118. Gly79 lines the anthranilate pocket. Position 91 (Ser91) interacts with Mg(2+). Asn109 is an anthranilate binding site. Arg164 serves as a coordination point for anthranilate. Residues Asp223 and Glu224 each contribute to the Mg(2+) site.

It belongs to the anthranilate phosphoribosyltransferase family. As to quaternary structure, homodimer. Mg(2+) serves as cofactor.

It catalyses the reaction N-(5-phospho-beta-D-ribosyl)anthranilate + diphosphate = 5-phospho-alpha-D-ribose 1-diphosphate + anthranilate. Its pathway is amino-acid biosynthesis; L-tryptophan biosynthesis; L-tryptophan from chorismate: step 2/5. Catalyzes the transfer of the phosphoribosyl group of 5-phosphorylribose-1-pyrophosphate (PRPP) to anthranilate to yield N-(5'-phosphoribosyl)-anthranilate (PRA). The chain is Anthranilate phosphoribosyltransferase from Saccharolobus islandicus (strain L.S.2.15 / Lassen #1) (Sulfolobus islandicus).